Reading from the N-terminus, the 377-residue chain is Nitric oxide reductase FlRd-NAD(+) reductase (377 aa).

It belongs to the FAD-dependent oxidoreductase family. FAD is required as a cofactor.

The protein resides in the cytoplasm. The catalysed reaction is 2 reduced [nitric oxide reductase rubredoxin domain] + NAD(+) + H(+) = 2 oxidized [nitric oxide reductase rubredoxin domain] + NADH. It participates in nitrogen metabolism; nitric oxide reduction. Functionally, one of at least two accessory proteins for anaerobic nitric oxide (NO) reductase. Reduces the rubredoxin moiety of NO reductase. In Salmonella dublin (strain CT_02021853), this protein is Nitric oxide reductase FlRd-NAD(+) reductase.